A 173-amino-acid polypeptide reads, in one-letter code: NADH-ubiquinone oxidoreductase chain 6 (173 aa).

The next 5 helical transmembrane spans lie at 1-21 (MTYLVLLLGLCFVLGGLAVAS), 27-47 (YGVVGLVLASVAGCGWLLSLG), 48-68 (VSFVSLVLFMVYLGGMLVVFV), 88-108 (VGYGASFILVVIAGMIVGGLI), and 139-159 (YGVGMFLVAGWGLLLTLFVVL).

The protein belongs to the complex I subunit 6 family.

It is found in the mitochondrion membrane. It catalyses the reaction a ubiquinone + NADH + 5 H(+)(in) = a ubiquinol + NAD(+) + 4 H(+)(out). Functionally, core subunit of the mitochondrial membrane respiratory chain NADH dehydrogenase (Complex I) that is believed to belong to the minimal assembly required for catalysis. Complex I functions in the transfer of electrons from NADH to the respiratory chain. The immediate electron acceptor for the enzyme is believed to be ubiquinone. The chain is NADH-ubiquinone oxidoreductase chain 6 (MT-ND6) from Calidris maritima (Purple sandpiper).